A 509-amino-acid chain; its full sequence is UDP-N-acetylmuramoylalanine--D-glutamate ligase (509 aa).

ATP is bound at residue 116–122; sequence GTNGKST.

Belongs to the MurCDEF family.

It localises to the cytoplasm. The enzyme catalyses UDP-N-acetyl-alpha-D-muramoyl-L-alanine + D-glutamate + ATP = UDP-N-acetyl-alpha-D-muramoyl-L-alanyl-D-glutamate + ADP + phosphate + H(+). Its pathway is cell wall biogenesis; peptidoglycan biosynthesis. Its function is as follows. Cell wall formation. Catalyzes the addition of glutamate to the nucleotide precursor UDP-N-acetylmuramoyl-L-alanine (UMA). This chain is UDP-N-acetylmuramoylalanine--D-glutamate ligase, found in Wolbachia pipientis wMel.